We begin with the raw amino-acid sequence, 390 residues long: GTPase Obg (390 aa).

In terms of domain architecture, Obg spans 1–159 (MKFVDEASIL…RELLLELMLL (159 aa)). Positions 127–147 (NTRFKSSVNRTPRQKTNGTPG) are disordered. The span at 129–145 (RFKSSVNRTPRQKTNGT) shows a compositional bias: polar residues. Residues 160-333 (ADVGMLGMPN…LCWDVMTFII (174 aa)) enclose the OBG-type G domain. GTP-binding positions include 166–173 (GMPNAGKS), 191–195 (FTTLV), 213–216 (DIPG), 283–286 (NKID), and 314–316 (SAA). Serine 173 and threonine 193 together coordinate Mg(2+).

Belongs to the TRAFAC class OBG-HflX-like GTPase superfamily. OBG GTPase family. In terms of assembly, monomer. Mg(2+) is required as a cofactor.

It localises to the cytoplasm. Functionally, an essential GTPase which binds GTP, GDP and possibly (p)ppGpp with moderate affinity, with high nucleotide exchange rates and a fairly low GTP hydrolysis rate. Plays a role in control of the cell cycle, stress response, ribosome biogenesis and in those bacteria that undergo differentiation, in morphogenesis control. The chain is GTPase Obg from Shigella dysenteriae serotype 1 (strain Sd197).